Reading from the N-terminus, the 353-residue chain is Guanine nucleotide-binding protein subunit alpha (353 aa).

Gly-2 is lipidated: N-myristoyl glycine. Cys-3 is lipidated: S-palmitoyl cysteine. The 321-residue stretch at Asn-33 to Leu-353 folds into the G-alpha domain. Residues Lys-36–Thr-49 are G1 motif. Positions 44, 45, 46, 47, 48, 49, 150, 175, 181, 203, 269, 270, 272, and 325 each coordinate GTP. A Mg(2+)-binding site is contributed by Ser-48. The interval Asp-173 to Thr-181 is G2 motif. Thr-181 lines the Mg(2+) pocket. Residues Tyr-196–Arg-205 form a G3 motif region. The tract at residues Ile-265–Asp-272 is G4 motif. The interval Thr-323–Thr-328 is G5 motif.

The protein belongs to the G-alpha family. G(q) subfamily. In terms of assembly, g proteins are composed of 3 units; alpha, beta and gamma. The alpha chain contains the guanine nucleotide binding site. The cofactor is Mg(2+).

In terms of biological role, guanine nucleotide-binding proteins (G proteins) are involved as modulators or transducers in various transmembrane signaling systems. In Coprinellus congregatus (Inky cap fungus), this protein is Guanine nucleotide-binding protein subunit alpha (CGP1).